Consider the following 396-residue polypeptide: Phosphoglycerate kinase (396 aa).

Residues 21-23, R36, 59-62, R119, and R156 each bind substrate; these read DFN and HLGK. ATP is bound by residues K206, G294, E325, and 352–355; that span reads GGDS.

This sequence belongs to the phosphoglycerate kinase family. In terms of assembly, monomer.

It is found in the cytoplasm. The catalysed reaction is (2R)-3-phosphoglycerate + ATP = (2R)-3-phospho-glyceroyl phosphate + ADP. The protein operates within carbohydrate degradation; glycolysis; pyruvate from D-glyceraldehyde 3-phosphate: step 2/5. The polypeptide is Phosphoglycerate kinase (Staphylococcus aureus (strain bovine RF122 / ET3-1)).